A 464-amino-acid chain; its full sequence is Argininosuccinate lyase (464 aa).

It belongs to the lyase 1 family. Argininosuccinate lyase subfamily.

The protein localises to the cytoplasm. The catalysed reaction is 2-(N(omega)-L-arginino)succinate = fumarate + L-arginine. It functions in the pathway amino-acid biosynthesis; L-arginine biosynthesis; L-arginine from L-ornithine and carbamoyl phosphate: step 3/3. The chain is Argininosuccinate lyase from Pseudomonas aeruginosa (strain UCBPP-PA14).